A 483-amino-acid polypeptide reads, in one-letter code: MAKNNTNRHYSLRKLKKGTASVAVALSVIGAGLVVNTNEVSARVFPRGTVENPDKARELLNKYDVENSMLQANNDKLTTENNNLTDQNKNLTTENKNLTDQNKNLTTENKNLTDQNKNLTTENKELKAEENRLTTENKGLTKKLSEAEEEAANKERENKEAIGTLKKTLDETVKDKIAKEQESKETIGTLKKTLDETVKDKIAKEQESKETIGTLKKTLDETVKDKIAKEQESKETIGTLKKILDETVKDKIAREQKSKQDIGALKQELAKKDEGNKVSEASRKGLRRDLDASREAKKQVEKDLANLTAELDKVKEEKQISDASRQGLRRDLDASREAKKQVEKALEEANSKLAALEKLNKELEESKKLTEKEKAELQAKLEAEAKALKEQLAKQAEELAKLRAGKASDSQTPDAKPGNKVVPGKGQAPQAGTKPNQNKAPMKETKRQLPSTGETANPFFTAAALTVMATAGVAAVVKRKEEN.

A signal peptide spans 1–42 (MAKNNTNRHYSLRKLKKGTASVAVALSVIGAGLVVNTNEVSA). Positions 54–171 (DKARELLNKY…IGTLKKTLDE (118 aa)) form a coiled coil. A run of 8 repeats spans residues 69-75 (MLQANND), 76-82 (KLTTENN), 83-89 (NLTDQNK), 90-96 (NLTTENK), 97-103 (NLTDQNK), 104-110 (NLTTENK), 111-117 (NLTDQNK), and 118-124 (NLTTENK). Residues 69–138 (MLQANNDKLT…EENRLTTENK (70 aa)) form a 10 X 7 AA approximate tandem repeats of [KMNR]-L-[TQ]-[TDA]-[ENQ]-N-[NDK] region. Polar residues predominate over residues 74-87 (NDKLTTENNNLTDQ). Residues 74 to 157 (NDKLTTENNN…EEEAANKERE (84 aa)) form a disordered region. Residues 88-113 (NKNLTTENKNLTDQNKNLTTENKNLT) are compositionally biased toward low complexity. 2 stretches are compositionally biased toward basic and acidic residues: residues 122 to 135 (ENKE…RLTT) and 143 to 157 (KLSE…KERE). The 9-1; approximate repeat unit spans residues 125–131 (ELKAEEN). Tandem repeats lie at residues 132-138 (RLTTENK), 157-181 (ENKE…AKEQ), 182-206 (ESKE…AKEQ), 207-231 (ESKE…AKEQ), and 232-256 (ESKE…AREQ). Residues 157-269 (ENKEAIGTLK…QDIGALKQEL (113 aa)) are 4.5 X 25 AA tandem repeats of E-[NS]-K-E-[TA]-I-G-T-L-K-K-[TI]-L-D-E-T-V-K-D-K-I-A-[KR]-E-Q. Disordered regions lie at residues 255–298 (EQKS…EAKK) and 314–345 (VKEE…VEKA). Residues 257 to 269 (KSKQDIGALKQEL) form a 5-2; truncated repeat. Basic and acidic residues-rich tracts occupy residues 268 to 298 (ELAK…EAKK) and 328 to 345 (LRRD…VEKA). C repeat units follow at residues 270–304 (AKKD…EKDL) and 312–346 (DKVK…EKAL). Residues 279–347 (SEASRKGLRR…AKKQVEKALE (69 aa)) are binding to CD46. The segment at 279–347 (SEASRKGLRR…AKKQVEKALE (69 aa)) is two directly repeated 27 amino acid blocks separated by 15 amino acids. Residues 280–408 (EASRKGLRRD…LAKLRAGKAS (129 aa)) are a coiled coil. A hydrophilic region spans residues 348–411 (EANSKLAALE…LRAGKASDSQ (64 aa)). D repeat units lie at residues 379 to 384 (AKLEAE), 385 to 390 (AKALKE), 393 to 398 (AKQAEE), and 400 to 405 (AKLRAG). Residues 400–455 (AKLRAGKASDSQTPDAKPGNKVVPGKGQAPQAGTKPNQNKAPMKETKRQLPSTGET) form a disordered region. The LPXTG sorting signal motif lies at 449–453 (LPSTG). Thr452 carries the pentaglycyl murein peptidoglycan amidated threonine modification. Residues 453 to 483 (GETANPFFTAAALTVMATAGVAAVVKRKEEN) constitute a propeptide, removed by sortase.

The protein belongs to the M protein family.

The protein localises to the secreted. It is found in the cell wall. In terms of biological role, mediates the attachment of S.pyogenes to skin epithelial cells through the binding of the human membrane cofactor protein CD46. Also binds to the factor H and factor H-like protein 1. These interactions could contribute to the fact that the M6 protein protects the bacterium from the phagocytosis by regulating the complement activation on the bacterial surface. This chain is M protein, serotype 6 (emm6), found in Streptococcus pyogenes.